The following is a 191-amino-acid chain: Adenylate kinase (191 aa).

10–15 (GAGKGT) provides a ligand contact to ATP. Positions 30-59 (STGDIFRANVTEGTPLGVEAKRYMDAGEYV) are NMP. Residues T31, R36, 57–59 (EYV), 85–88 (GYPR), and Q92 contribute to the AMP site. Positions 126-136 (QRAQVEGRADD) are LID. R127 lines the ATP pocket. AMP is bound by residues R133 and R144. Residue G172 participates in ATP binding.

This sequence belongs to the adenylate kinase family. Monomer.

The protein resides in the cytoplasm. It carries out the reaction AMP + ATP = 2 ADP. It functions in the pathway purine metabolism; AMP biosynthesis via salvage pathway; AMP from ADP: step 1/1. Its function is as follows. Catalyzes the reversible transfer of the terminal phosphate group between ATP and AMP. Plays an important role in cellular energy homeostasis and in adenine nucleotide metabolism. The sequence is that of Adenylate kinase from Nocardioides sp. (strain ATCC BAA-499 / JS614).